Reading from the N-terminus, the 213-residue chain is Putative thymidylate kinase 251L (213 aa).

21–28 is an ATP binding site; the sequence is GCDKTGKS.

The protein belongs to the thymidylate kinase family.

It catalyses the reaction dTMP + ATP = dTDP + ADP. The protein operates within pyrimidine metabolism; dTTP biosynthesis. In terms of biological role, catalyzes the conversion of dTMP to dTDP. This is Putative thymidylate kinase 251L from Acheta domesticus (House cricket).